Reading from the N-terminus, the 372-residue chain is MENQLQNKPIIELRSIKKSYGSNTIINDFNLTINNGEFVTILGPSGCGKTTVLRLLAGLEELDSGSIILDGEDITNVPAEKRHINTVFQSYALFPHMTIFENVAFGLRMQKVPNEEIKPRVLEALRMVQLEEMADRKPTQLSGGQQQRIAIARAVVNKPKVLLLDESLSALDYKLRKQMQQELKMLQRQLGITFIFVTHDQEEAITMSDRIVLLRKGKIAQDGSPREIYEDPANLFVARFIGEINVFEATVIERKSEQVVLANVEGRICDIYTDMPVEKDQKLQVLLRPEDIVIEELDENEHSKAIIGHIIDRTYKGMTLESTVEFDHNGMRVLVSEFFNEDDPHMDHSIGQRVGITWHEGWEVVLNDEDNQ.

The region spanning 11 to 241 (IELRSIKKSY…PANLFVARFI (231 aa)) is the ABC transporter domain. 43-50 (GPSGCGKT) is a binding site for ATP.

Belongs to the ABC transporter superfamily. Spermidine/putrescine importer (TC 3.A.1.11.1) family. In terms of assembly, the complex is composed of two ATP-binding proteins (PotA), two transmembrane proteins (PotB and PotC) and a solute-binding protein (PotD).

It is found in the cell inner membrane. The enzyme catalyses ATP + H2O + polyamine-[polyamine-binding protein]Side 1 = ADP + phosphate + polyamineSide 2 + [polyamine-binding protein]Side 1.. In terms of biological role, part of the ABC transporter complex PotABCD involved in spermidine/putrescine import. Responsible for energy coupling to the transport system. The chain is Spermidine/putrescine import ATP-binding protein PotA from Haemophilus influenzae (strain ATCC 51907 / DSM 11121 / KW20 / Rd).